Here is a 362-residue protein sequence, read N- to C-terminus: Phosphoserine aminotransferase (362 aa).

Arg-43 provides a ligand contact to L-glutamate. Pyridoxal 5'-phosphate-binding positions include Ala-77–Thr-78, Trp-103, Thr-153, Asp-173, and Gln-196. An N6-(pyridoxal phosphate)lysine modification is found at Lys-197. Residue Asn-238–Thr-239 coordinates pyridoxal 5'-phosphate.

It belongs to the class-V pyridoxal-phosphate-dependent aminotransferase family. SerC subfamily. As to quaternary structure, homodimer. The cofactor is pyridoxal 5'-phosphate.

It localises to the cytoplasm. The catalysed reaction is O-phospho-L-serine + 2-oxoglutarate = 3-phosphooxypyruvate + L-glutamate. It carries out the reaction 4-(phosphooxy)-L-threonine + 2-oxoglutarate = (R)-3-hydroxy-2-oxo-4-phosphooxybutanoate + L-glutamate. It participates in amino-acid biosynthesis; L-serine biosynthesis; L-serine from 3-phospho-D-glycerate: step 2/3. Its pathway is cofactor biosynthesis; pyridoxine 5'-phosphate biosynthesis; pyridoxine 5'-phosphate from D-erythrose 4-phosphate: step 3/5. Functionally, catalyzes the reversible conversion of 3-phosphohydroxypyruvate to phosphoserine and of 3-hydroxy-2-oxo-4-phosphonooxybutanoate to phosphohydroxythreonine. The protein is Phosphoserine aminotransferase of Xylella fastidiosa (strain Temecula1 / ATCC 700964).